The chain runs to 275 residues: MQNITDSWFVQGMIKATSDAWLKGWDERNGGNLTLRLDEADIAPFATNFHEKPRYIALSQPMPLLANTPFIVTGSGKFFRNVQLDPAANLGVVKIDSDGAGYHILWGLTHDAVPTSELPAHFLSHCERIKATHGKDRVIMHCHATNLIALTYVLENNTALITRKLWEGSTECLVVFPDGVGILPWMVPGTDEIGQATAQEMQKHSLVLWPFHGVFGSGPTLDETFGLIDTAEKSAEVLVKIYSMGGMKQTITREELVALGKRFGVTPLASAVALY.

Glutamate 117 is an active-site residue. Residues histidine 141, histidine 143, and histidine 212 each contribute to the Zn(2+) site.

It belongs to the aldolase class II family. RhaD subfamily. In terms of assembly, homotetramer. It depends on Zn(2+) as a cofactor.

It localises to the cytoplasm. The catalysed reaction is L-rhamnulose 1-phosphate = (S)-lactaldehyde + dihydroxyacetone phosphate. It functions in the pathway carbohydrate degradation; L-rhamnose degradation; glycerone phosphate from L-rhamnose: step 3/3. Its function is as follows. Catalyzes the reversible cleavage of L-rhamnulose-1-phosphate to dihydroxyacetone phosphate (DHAP) and L-lactaldehyde. This Salmonella dublin (strain CT_02021853) protein is Rhamnulose-1-phosphate aldolase.